The primary structure comprises 132 residues: uncharacterized protein (132 aa).

Transmembrane regions (helical) follow at residues 19 to 39 (FTWI…FIFL), 58 to 78 (IGLR…VAVM), and 93 to 113 (LIAY…CAAL).

This sequence belongs to the bacteriophage holin family. Cp-1 holin subfamily.

The protein resides in the cell membrane. This is an uncharacterized protein from Clostridium perfringens.